The chain runs to 395 residues: LIM/homeobox protein Lhx3 (395 aa).

LIM zinc-binding domains follow at residues 28 to 78 (CAGC…CKED) and 87 to 141 (CAAC…CKAD). The homeobox DNA-binding region spans 154–213 (AKRPRTTITAKQLETLKNAYNNSPKPARHVREQLSSETGLDMRVVQVWFQNRRAKEKRLK). Disordered stretches follow at residues 209–325 (EKRL…LQAL) and 348–395 (GGQG…HAQF). The segment covering 257–276 (DEPSMSEMSHSNGIYSNLSE) has biased composition (polar residues).

The protein localises to the nucleus. Functionally, transcription factor. Defines subclasses of motoneurons that segregate into columns in the spinal cord and select distinct axon pathways. Acts in conjunction with LIM-1, ISL-1 and ISL-2. This is LIM/homeobox protein Lhx3 (LHX3) from Gallus gallus (Chicken).